The primary structure comprises 300 residues: 33 kDa chaperonin (300 aa).

Cystine bridges form between cysteine 235/cysteine 237 and cysteine 269/cysteine 272.

The protein belongs to the HSP33 family. In terms of processing, under oxidizing conditions two disulfide bonds are formed involving the reactive cysteines. Under reducing conditions zinc is bound to the reactive cysteines and the protein is inactive.

The protein resides in the cytoplasm. Functionally, redox regulated molecular chaperone. Protects both thermally unfolding and oxidatively damaged proteins from irreversible aggregation. Plays an important role in the bacterial defense system toward oxidative stress. This chain is 33 kDa chaperonin, found in Pseudomonas savastanoi pv. phaseolicola (strain 1448A / Race 6) (Pseudomonas syringae pv. phaseolicola (strain 1448A / Race 6)).